The chain runs to 62 residues: MTIAFQLAVFALIVTSSVLVISVPLVFASPDGWSNNKNVVFSGTSLWIGLVFLVAILNSLIS.

2 helical membrane-spanning segments follow: residues 8 to 28 (AVFALIVTSSVLVISVPLVFA) and 41 to 61 (FSGTSLWIGLVFLVAILNSLI).

The protein belongs to the PsbZ family. In terms of assembly, PSII is composed of 1 copy each of membrane proteins PsbA, PsbB, PsbC, PsbD, PsbE, PsbF, PsbH, PsbI, PsbJ, PsbK, PsbL, PsbM, PsbT, PsbY, PsbZ, Psb30/Ycf12, at least 3 peripheral proteins of the oxygen-evolving complex and a large number of cofactors. It forms dimeric complexes.

It localises to the plastid. Its subcellular location is the chloroplast thylakoid membrane. Functionally, may control the interaction of photosystem II (PSII) cores with the light-harvesting antenna, regulates electron flow through the 2 photosystem reaction centers. PSII is a light-driven water plastoquinone oxidoreductase, using light energy to abstract electrons from H(2)O, generating a proton gradient subsequently used for ATP formation. The chain is Photosystem II reaction center protein Z from Oryza nivara (Indian wild rice).